The chain runs to 261 residues: MSTNTVPTPDDEGPTEWIGDLEVRRVSGDIQEHADLSTRSKARKQALDILFEADLIGTDPLEVLAARPGVFTNPVRPFAADLVRGVAATQVGLDSVLTDCLSEGWTLARMPRVDRILARLGAFEILHTDTPNPAVISEAIELSEEFSTDDSAPFLNGLLGAVITHGPARVEDQPSDDAASLTCPAPDGGSEQPPITVDDVGSMASSSDSFPAEVGNVDTTSGNASDPENSADDFELTGGEHPTSKDHELATDLHKKDTTDD.

A disordered region spans residues 168-261 (ARVEDQPSDD…DLHKKDTTDD (94 aa)). Residues 217-228 (VDTTSGNASDPE) are compositionally biased toward polar residues. Residues 242–261 (PTSKDHELATDLHKKDTTDD) show a composition bias toward basic and acidic residues.

The protein belongs to the NusB family.

Functionally, involved in transcription antitermination. Required for transcription of ribosomal RNA (rRNA) genes. Binds specifically to the boxA antiterminator sequence of the ribosomal RNA (rrn) operons. In Cutibacterium acnes (strain DSM 16379 / KPA171202) (Propionibacterium acnes), this protein is Transcription antitermination protein NusB.